A 111-amino-acid polypeptide reads, in one-letter code: uncharacterized protein (111 aa).

This is an uncharacterized protein from Microplitis demolitor bracovirus (isolate Webb) (MdBV).